Here is a 317-residue protein sequence, read N- to C-terminus: Acetyl-coenzyme A carboxylase carboxyl transferase subunit alpha (317 aa).

Residues 40-293 (LEVRVREAIV…GDVIASALAE (254 aa)) enclose the CoA carboxyltransferase C-terminal domain.

It belongs to the AccA family. Acetyl-CoA carboxylase is a heterohexamer composed of biotin carboxyl carrier protein (AccB), biotin carboxylase (AccC) and two subunits each of ACCase subunit alpha (AccA) and ACCase subunit beta (AccD).

It localises to the cytoplasm. The enzyme catalyses N(6)-carboxybiotinyl-L-lysyl-[protein] + acetyl-CoA = N(6)-biotinyl-L-lysyl-[protein] + malonyl-CoA. The protein operates within lipid metabolism; malonyl-CoA biosynthesis; malonyl-CoA from acetyl-CoA: step 1/1. Its function is as follows. Component of the acetyl coenzyme A carboxylase (ACC) complex. First, biotin carboxylase catalyzes the carboxylation of biotin on its carrier protein (BCCP) and then the CO(2) group is transferred by the carboxyltransferase to acetyl-CoA to form malonyl-CoA. The sequence is that of Acetyl-coenzyme A carboxylase carboxyl transferase subunit alpha from Rhizobium johnstonii (strain DSM 114642 / LMG 32736 / 3841) (Rhizobium leguminosarum bv. viciae).